Reading from the N-terminus, the 355-residue chain is Protein RecA (355 aa).

ATP is bound at residue 65–72; the sequence is GPESSGKT.

The protein belongs to the RecA family.

It is found in the cytoplasm. Functionally, can catalyze the hydrolysis of ATP in the presence of single-stranded DNA, the ATP-dependent uptake of single-stranded DNA by duplex DNA, and the ATP-dependent hybridization of homologous single-stranded DNAs. It interacts with LexA causing its activation and leading to its autocatalytic cleavage. This Pseudomonas putida (strain ATCC 47054 / DSM 6125 / CFBP 8728 / NCIMB 11950 / KT2440) protein is Protein RecA.